Reading from the N-terminus, the 225-residue chain is Uracil-DNA glycosylase (225 aa).

Catalysis depends on Asp65, which acts as the Proton acceptor.

It belongs to the uracil-DNA glycosylase (UDG) superfamily. UNG family.

Its subcellular location is the cytoplasm. The enzyme catalyses Hydrolyzes single-stranded DNA or mismatched double-stranded DNA and polynucleotides, releasing free uracil.. Its function is as follows. Excises uracil residues from the DNA which can arise as a result of misincorporation of dUMP residues by DNA polymerase or due to deamination of cytosine. This Clostridium perfringens (strain SM101 / Type A) protein is Uracil-DNA glycosylase.